The primary structure comprises 1006 residues: Phosphatidylinositol 4,5-bisphosphate 5-phosphatase A (1006 aa).

The interval 1-416 (MEGQSSRGSR…SSSPWSAQPT (416 aa)) is disordered. A compositionally biased stretch (polar residues) spans 27–41 (VAQTGAPSKVDSSFQ). R56 carries the post-translational modification Asymmetric dimethylarginine; alternate. R56 is modified (omega-N-methylarginine; alternate). R65 carries the omega-N-methylarginine modification. R76 carries the asymmetric dimethylarginine modification. Residue R83 is modified to Asymmetric dimethylarginine; alternate. R83 bears the Omega-N-methylarginine; alternate mark. The span at 94–112 (GQKTATAHRSSSLAPTSVG) shows a compositional bias: polar residues. The RSXSXX motif 1 signature appears at 102 to 107 (RSSSLA). The segment covering 180 to 193 (LAASGLSLALASEE) has biased composition (low complexity). The span at 196–209 (PELPSTPSPVPSPV) shows a compositional bias: pro residues. Residues 210 to 234 (LSPTQEQALAPASTASGAASVGQTS) show a composition bias toward low complexity. Polar residues predominate over residues 256 to 273 (PAQTSGPTGSPPCIQTSP). 2 positions are modified to phosphoserine: S291 and S324. Positions 337-347 (VPPPLPKPPRS) are enriched in pro residues. Residues 345 to 350 (PRSPSR) carry the SH3-binding motif. 2 stretches are compositionally biased toward low complexity: residues 348-360 (PSRS…NRSP) and 398-409 (TTSSSTSTLSSS). The RSXSXX motif 2 motif lies at 350 to 355 (RSPSHS). A catalytic region spans residues 425-728 (ITVVTWNVGT…SDHKPVAAQF (304 aa)). The segment at 729 to 840 (LLQFAFRDDM…IGITEPFQIS (112 aa)) is required for ruffle localization. A compositionally biased stretch (low complexity) spans 844-858 (SELASSSTDSSGTSS). Positions 844–1006 (SELASSSTDS…RGLEEGGLGP (163 aa)) are disordered. Short sequence motifs (RSXSXX motif) lie at residues 874-879 (RSPSPG) and 885-890 (RSRSPG). S903 is modified (phosphoserine). Residues 911-916 (RSPSPQ) carry the RSXSXX motif 5 motif. A compositionally biased stretch (low complexity) spans 927–946 (RSSNGSSRGSSEEGPSGLPG). Position 990 is a phosphoserine (S990).

Belongs to the inositol 1,4,5-trisphosphate 5-phosphatase type II family.

The protein localises to the cytoplasm. The enzyme catalyses 1D-myo-inositol 1,4,5-trisphosphate + H2O = 1D-myo-inositol 1,4-bisphosphate + phosphate. It catalyses the reaction 1D-myo-inositol 1,3,4,5-tetrakisphosphate + H2O = 1D-myo-inositol 1,3,4-trisphosphate + phosphate. The catalysed reaction is a 1,2-diacyl-sn-glycero-3-phospho-(1D-myo-inositol-4,5-bisphosphate) + H2O = a 1,2-diacyl-sn-glycero-3-phospho-(1D-myo-inositol 4-phosphate) + phosphate. Functionally, inositol 5-phosphatase, which converts inositol 1,4,5-trisphosphate to inositol 1,4-bisphosphate. Also converts phosphatidylinositol 4,5-bisphosphate to phosphatidylinositol 4-phosphate and inositol 1,3,4,5-tetrakisphosphate to inositol 1,3,4-trisphosphate in vitro. May be involved in modulation of the function of inositol and phosphatidylinositol polyphosphate-binding proteins that are present at membranes ruffles. In Homo sapiens (Human), this protein is Phosphatidylinositol 4,5-bisphosphate 5-phosphatase A (INPP5J).